A 146-amino-acid polypeptide reads, in one-letter code: Hemoglobin subunit beta (146 aa).

N-acetylvaline is present on Val1. In terms of domain architecture, Globin spans His2 to His146. Thr12 carries the post-translational modification Phosphothreonine. Position 44 is a phosphoserine (Ser44). At Lys59 the chain carries N6-acetyllysine. His63 is a heme b binding site. Lys82 carries the N6-acetyllysine modification. Heme b is bound at residue His92. Cys93 is modified (S-nitrosocysteine). The residue at position 144 (Lys144) is an N6-acetyllysine.

Belongs to the globin family. As to quaternary structure, heterotetramer of two alpha chains and two beta chains. In terms of tissue distribution, red blood cells.

Its function is as follows. Involved in oxygen transport from the lung to the various peripheral tissues. The chain is Hemoglobin subunit beta (HBB) from Mellivora capensis (Ratel).